Consider the following 440-residue polypeptide: Xylose isomerase (440 aa).

Residues His-100 and Asp-103 contribute to the active site. 7 residues coordinate Mg(2+): Glu-231, Glu-267, His-270, Asp-295, Asp-306, Asp-308, and Asp-338.

It belongs to the xylose isomerase family. As to quaternary structure, homotetramer. Requires Mg(2+) as cofactor.

Its subcellular location is the cytoplasm. It carries out the reaction alpha-D-xylose = alpha-D-xylulofuranose. This is Xylose isomerase from Paraburkholderia xenovorans (strain LB400).